The primary structure comprises 146 residues: Meiotically up-regulated gene 96 protein (146 aa).

Residues 85-104 form a helical membrane-spanning segment; the sequence is LIRYSLILTCLVAILLSVLW.

Its subcellular location is the cytoplasm. It localises to the membrane. In terms of biological role, has a role in meiosis. The sequence is that of Meiotically up-regulated gene 96 protein (mug96) from Schizosaccharomyces pombe (strain 972 / ATCC 24843) (Fission yeast).